The sequence spans 417 residues: Serine/threonine-protein phosphatase 4 regulatory subunit 2 (417 aa).

Polar residues-rich tracts occupy residues 140-149 (EKNNSNSLNR), 158-170 (NSPSYTERSNING), and 186-196 (APMTTNGLPES). The segment at 140–417 (EKNNSNSLNR…EVTDEPMEQD (278 aa)) is disordered. Serine 159 is subject to Phosphoserine. Positions 197 to 213 (TDSKEANLQQNEEKNHS) are enriched in basic and acidic residues. Residues 214 to 226 (DSSTSESEVSSVS) show a composition bias toward low complexity. The residue at position 226 (serine 226) is a Phosphoserine. Residues 231–258 (KHPDEDAVEAEGHEVKRLRFDKEGEVRE) show a composition bias toward basic and acidic residues. Residues 259–269 (TASQTTSSEIS) are compositionally biased toward polar residues. Positions 283-297 (QDKDKDSRCTRQHCT) are enriched in basic and acidic residues. A compositionally biased stretch (acidic residues) spans 298 to 311 (EEDEEEDEEEEEES). A compositionally biased stretch (basic and acidic residues) spans 318 to 327 (MIPERKNQEK). The segment covering 338-350 (ETSEENNQMEESD) has biased composition (acidic residues). Residues 353 to 363 (QAEKDLLHSEG) are compositionally biased toward basic and acidic residues. Low complexity predominate over residues 366–375 (NEGPVSSSSS). Over residues 385–399 (GSNSSKTGEILSESS) the composition is skewed to polar residues. The segment covering 400-417 (MENDDEATEVTDEPMEQD) has biased composition (acidic residues).

Belongs to the PPP4R2 family. As to quaternary structure, serine/threonine-protein phosphatase 4 (PP4) occurs in different assemblies of the catalytic and one or more regulatory subunits. Component of the PP4 complexes PPP4C-PPP4R2, PPP4C-PPP4R2-PPP4R3A and PPP4C-PPP4R2-PPP4R3B. The PPP4C-PPP4R2 complex appears to be a tetramer composed of 2 molecules of PPP4C and 2 molecules of PPP4R2. Interacts with DDX20/GEMIN3 and GEMIN4. Interacts with RPA2; this DNA damage-dependent interaction recruits PPP4C leading to RPA2 dephosphorylation. In terms of tissue distribution, widely expressed.

The protein resides in the cytoplasm. It is found in the cytoskeleton. Its subcellular location is the microtubule organizing center. It localises to the centrosome. The protein localises to the nucleus. Functionally, regulatory subunit of serine/threonine-protein phosphatase 4 (PP4). May regulate the activity of PPP4C at centrosomal microtubule organizing centers. Its interaction with the SMN complex leads to enhance the temporal localization of snRNPs, suggesting a role of PPP4C in maturation of spliceosomal snRNPs. The PPP4C-PPP4R2-PPP4R3A PP4 complex specifically dephosphorylates H2AX phosphorylated on 'Ser-140' (gamma-H2AX) generated during DNA replication and required for DNA double strand break repair. Mediates RPA2 dephosphorylation by recruiting PPP4C to RPA2 in a DNA damage-dependent manner. RPA2 dephosphorylation is required for the efficient RPA2-mediated recruitment of RAD51 to chromatin following double strand breaks, an essential step for DNA repair. The polypeptide is Serine/threonine-protein phosphatase 4 regulatory subunit 2 (PPP4R2) (Homo sapiens (Human)).